The chain runs to 195 residues: Penicillin-binding protein activator LpoB (195 aa).

The signal sequence occupies residues 1 to 16 (MKKYLFVALAALVLTG). A lipid anchor (N-palmitoyl cysteine) is attached at Cys-17. The S-diacylglycerol cysteine moiety is linked to residue Cys-17. The interval 19 to 55 (SRPPEPEQPQPPVTVEPVTPPVVEEPQPPVTEPVPQP) is disordered. Composition is skewed to pro residues over residues 24–38 (PEQP…PVTP) and 44–55 (PQPPVTEPVPQP).

The protein belongs to the LpoB family. As to quaternary structure, interacts with PBP1b.

It is found in the cell outer membrane. Its function is as follows. Regulator of peptidoglycan synthesis that is essential for the function of penicillin-binding protein 1B (PBP1b). In Serratia proteamaculans (strain 568), this protein is Penicillin-binding protein activator LpoB.